Reading from the N-terminus, the 188-residue chain is Protein SSX3 (188 aa).

In terms of domain architecture, KRAB-related spans 20–83 (KIQKAFDDIA…KRVTDFQGND (64 aa)). The interval 113–162 (PKKPAEEGNVSKEVPEASGPQNDGKQLCPPGKPTTSEKINMISGPKRGEH) is disordered. Residues 115 to 127 (KPAEEGNVSKEVP) show a composition bias toward basic and acidic residues. The residue at position 123 (Ser-123) is a Phosphoserine.

Belongs to the SSX family. As to quaternary structure, interacts with SSX2IP.

Its function is as follows. Could act as a modulator of transcription. The protein is Protein SSX3 (SSX3) of Homo sapiens (Human).